Reading from the N-terminus, the 447-residue chain is Tubulin beta-4 chain (447 aa).

Residues glutamine 11, glutamate 69, serine 138, glycine 142, threonine 143, glycine 144, asparagine 204, and asparagine 226 each coordinate GTP. Glutamate 69 lines the Mg(2+) pocket. The interval 423 to 447 (QQYQDATADEEGEYEDEEQQEADDM) is disordered. Over residues 429–447 (TADEEGEYEDEEQQEADDM) the composition is skewed to acidic residues.

Belongs to the tubulin family. In terms of assembly, dimer of alpha and beta chains. A typical microtubule is a hollow water-filled tube with an outer diameter of 25 nm and an inner diameter of 15 nM. Alpha-beta heterodimers associate head-to-tail to form protofilaments running lengthwise along the microtubule wall with the beta-tubulin subunit facing the microtubule plus end conferring a structural polarity. Microtubules usually have 13 protofilaments but different protofilament numbers can be found in some organisms and specialized cells. It depends on Mg(2+) as a cofactor. As to expression, expressed in roots and leaf sheaths.

The protein localises to the cytoplasm. It is found in the cytoskeleton. Tubulin is the major constituent of microtubules, a cylinder consisting of laterally associated linear protofilaments composed of alpha- and beta-tubulin heterodimers. Microtubules grow by the addition of GTP-tubulin dimers to the microtubule end, where a stabilizing cap forms. Below the cap, tubulin dimers are in GDP-bound state, owing to GTPase activity of alpha-tubulin. The protein is Tubulin beta-4 chain (TUBB4) of Oryza sativa subsp. japonica (Rice).